The sequence spans 897 residues: Coiled-coil domain-containing protein lobo (897 aa).

Residues Glu-27 to Phe-49 form a disordered region. Residues Asp-40–Phe-49 show a composition bias toward acidic residues. Coiled coils occupy residues Asp-269 to Leu-306 and Ser-801 to Thr-858.

It belongs to the DRC7 family. Testis-specific (at protein level).

The protein localises to the cell projection. It is found in the cilium. It localises to the flagellum. The protein resides in the cytoplasm. Its subcellular location is the cytoskeleton. The protein localises to the cilium axoneme. Its function is as follows. Key component of the nexin-dynein regulatory complex (N-DRC), essential for N-DRC integrity. Involved in the regulation of flagellar motility. Involved in sperm motility. Required for the sperm to enter in the coiled storage seminal receptacle (SR) tubule. In Drosophila melanogaster (Fruit fly), this protein is Coiled-coil domain-containing protein lobo (lobo).